The sequence spans 1038 residues: TonB-dependent receptor P39 (1038 aa).

The first 39 residues, 1–39, serve as a signal peptide directing secretion; sequence MFKQKLKMKPKIKRNCTFSGLAFILMLLFSSFTVNNLNA. Positions 120 to 127 match the TonB box motif; it reads DEVVVIGY. Residues 131–243 form the TBDR plug domain; sequence KRADVIGAVG…ANGVVLITTK (113 aa). In terms of domain architecture, TBDR beta-barrel spans 249-1038; that stretch reads FPKMTVDYIS…EIVIGLNVEF (790 aa). The TonB C-terminal box signature appears at 1021 to 1038; the sequence is SLRYPNQTEIVIGLNVEF.

This sequence belongs to the TonB-dependent receptor family.

It localises to the cell outer membrane. TonB-dependent receptor probably involved in ulvan degradation. Ulvan is the main polysaccharide component of the Ulvales (green seaweed) cell wall. It is composed of disaccharide building blocks comprising 3-sulfated rhamnose (Rha3S) linked to D-glucuronic acid (GlcA), L-iduronic acid (IduA), or D-xylose (Xyl). The TonB-dependent receptor may mediate transport of ulvan oligosaccharides from the surface of the outer membrane to the periplasm for subsequent degradation. The chain is TonB-dependent receptor P39 from Formosa agariphila (strain DSM 15362 / KCTC 12365 / LMG 23005 / KMM 3901 / M-2Alg 35-1).